Reading from the N-terminus, the 619-residue chain is UPF0329 protein ECU08_2070 (619 aa).

Composition is skewed to basic and acidic residues over residues 350-359 (EREKREESKG) and 369-385 (GAGE…RKEE). The interval 350-425 (EREKREESKG…REKKMGEEHH (76 aa)) is disordered. A compositionally biased stretch (acidic residues) spans 386–396 (EGVEVEEEESA).

The protein belongs to the UPF0329 family.

This is UPF0329 protein ECU08_2070 from Encephalitozoon cuniculi (strain GB-M1) (Microsporidian parasite).